The following is a 489-amino-acid chain: Glycogen synthase (489 aa).

Arg20 is a binding site for ADP-alpha-D-glucose.

Belongs to the glycosyltransferase 1 family. Bacterial/plant glycogen synthase subfamily.

It carries out the reaction [(1-&gt;4)-alpha-D-glucosyl](n) + ADP-alpha-D-glucose = [(1-&gt;4)-alpha-D-glucosyl](n+1) + ADP + H(+). It participates in glycan biosynthesis; glycogen biosynthesis. Functionally, synthesizes alpha-1,4-glucan chains using ADP-glucose. In Chlorobium luteolum (strain DSM 273 / BCRC 81028 / 2530) (Pelodictyon luteolum), this protein is Glycogen synthase.